A 184-amino-acid polypeptide reads, in one-letter code: ATP synthase subunit b, chloroplastic (184 aa).

A helical membrane pass occupies residues 31–49 (IINSSVVLSVLIYFGKGVL).

It belongs to the ATPase B chain family. F-type ATPases have 2 components, F(1) - the catalytic core - and F(0) - the membrane proton channel. F(1) has five subunits: alpha(3), beta(3), gamma(1), delta(1), epsilon(1). F(0) has four main subunits: a(1), b(1), b'(1) and c(10-14). The alpha and beta chains form an alternating ring which encloses part of the gamma chain. F(1) is attached to F(0) by a central stalk formed by the gamma and epsilon chains, while a peripheral stalk is formed by the delta, b and b' chains.

Its subcellular location is the plastid. The protein localises to the chloroplast thylakoid membrane. Functionally, f(1)F(0) ATP synthase produces ATP from ADP in the presence of a proton or sodium gradient. F-type ATPases consist of two structural domains, F(1) containing the extramembraneous catalytic core and F(0) containing the membrane proton channel, linked together by a central stalk and a peripheral stalk. During catalysis, ATP synthesis in the catalytic domain of F(1) is coupled via a rotary mechanism of the central stalk subunits to proton translocation. Its function is as follows. Component of the F(0) channel, it forms part of the peripheral stalk, linking F(1) to F(0). This Pinus thunbergii (Japanese black pine) protein is ATP synthase subunit b, chloroplastic.